We begin with the raw amino-acid sequence, 233 residues long: Probable chemoreceptor glutamine deamidase CheD (233 aa).

It belongs to the CheD family.

The catalysed reaction is L-glutaminyl-[protein] + H2O = L-glutamyl-[protein] + NH4(+). Probably deamidates glutamine residues to glutamate on methyl-accepting chemotaxis receptors (MCPs), playing an important role in chemotaxis. In Vibrio cholerae serotype O1 (strain ATCC 39315 / El Tor Inaba N16961), this protein is Probable chemoreceptor glutamine deamidase CheD.